The following is a 195-amino-acid chain: Imidazole glycerol phosphate synthase subunit HisH (195 aa).

Positions 1–193 (MIAIVDYGVG…RETTCNSTQQ (193 aa)) constitute a Glutamine amidotransferase type-1 domain. The Nucleophile role is filled by C78. Residues H168 and E170 contribute to the active site.

In terms of assembly, heterodimer of HisH and HisF.

It is found in the cytoplasm. It carries out the reaction 5-[(5-phospho-1-deoxy-D-ribulos-1-ylimino)methylamino]-1-(5-phospho-beta-D-ribosyl)imidazole-4-carboxamide + L-glutamine = D-erythro-1-(imidazol-4-yl)glycerol 3-phosphate + 5-amino-1-(5-phospho-beta-D-ribosyl)imidazole-4-carboxamide + L-glutamate + H(+). The enzyme catalyses L-glutamine + H2O = L-glutamate + NH4(+). Its pathway is amino-acid biosynthesis; L-histidine biosynthesis; L-histidine from 5-phospho-alpha-D-ribose 1-diphosphate: step 5/9. In terms of biological role, IGPS catalyzes the conversion of PRFAR and glutamine to IGP, AICAR and glutamate. The HisH subunit catalyzes the hydrolysis of glutamine to glutamate and ammonia as part of the synthesis of IGP and AICAR. The resulting ammonia molecule is channeled to the active site of HisF. This Exiguobacterium sibiricum (strain DSM 17290 / CCUG 55495 / CIP 109462 / JCM 13490 / 255-15) protein is Imidazole glycerol phosphate synthase subunit HisH.